The primary structure comprises 502 residues: Maturase K (502 aa).

This sequence belongs to the intron maturase 2 family. MatK subfamily.

Its subcellular location is the plastid. It is found in the chloroplast. Usually encoded in the trnK tRNA gene intron. Probably assists in splicing its own and other chloroplast group II introns. Binds its homologous trnK precursor transcript. This Sinapis alba (White mustard) protein is Maturase K.